Consider the following 342-residue polypeptide: tRNA-specific 2-thiouridylase MnmA 2 (342 aa).

Cys-62 (nucleophile) is an active-site residue. A disulfide bridge links Cys-62 with Cys-160. Gly-86 provides a ligand contact to ATP. The tract at residues 110 to 112 (KDQ) is interaction with tRNA. Cys-160 serves as the catalytic Cysteine persulfide intermediate. Residues 268–269 (RY) form an interaction with tRNA region.

The protein belongs to the MnmA/TRMU family.

The protein resides in the cytoplasm. The catalysed reaction is S-sulfanyl-L-cysteinyl-[protein] + uridine(34) in tRNA + AH2 + ATP = 2-thiouridine(34) in tRNA + L-cysteinyl-[protein] + A + AMP + diphosphate + H(+). Its function is as follows. Catalyzes the 2-thiolation of uridine at the wobble position (U34) of tRNA, leading to the formation of s(2)U34. The polypeptide is tRNA-specific 2-thiouridylase MnmA 2 (Syntrophus aciditrophicus (strain SB)).